We begin with the raw amino-acid sequence, 360 residues long: Phospho-N-acetylmuramoyl-pentapeptide-transferase (360 aa).

The next 10 helical transmembrane spans lie at 27–47, 71–91, 94–114, 132–152, 168–188, 199–219, 236–256, 263–283, 288–308, and 338–358; these read IVSLLTALAIALWMGPRMIAF, TPTMGGLLILLSITISTLLWV, NNPYVWCVLIVLIGYGIVGFV, WKYFWQSVLALGVAFAMYSFG, VMPQLGVLYILLTYFVIVGTS, GLAIMPTVFVAAGFALVAWAT, AGELVIVCTAIVGAGLGFLWF, VFMGDVGSLALGGALGTIAVL, FLLVIMGGVFVVETLSVILQV, and VIVRFWIISLMLVLIGLATLK.

The protein belongs to the glycosyltransferase 4 family. MraY subfamily. Mg(2+) is required as a cofactor.

Its subcellular location is the cell inner membrane. The catalysed reaction is UDP-N-acetyl-alpha-D-muramoyl-L-alanyl-gamma-D-glutamyl-meso-2,6-diaminopimeloyl-D-alanyl-D-alanine + di-trans,octa-cis-undecaprenyl phosphate = di-trans,octa-cis-undecaprenyl diphospho-N-acetyl-alpha-D-muramoyl-L-alanyl-D-glutamyl-meso-2,6-diaminopimeloyl-D-alanyl-D-alanine + UMP. The protein operates within cell wall biogenesis; peptidoglycan biosynthesis. Catalyzes the initial step of the lipid cycle reactions in the biosynthesis of the cell wall peptidoglycan: transfers peptidoglycan precursor phospho-MurNAc-pentapeptide from UDP-MurNAc-pentapeptide onto the lipid carrier undecaprenyl phosphate, yielding undecaprenyl-pyrophosphoryl-MurNAc-pentapeptide, known as lipid I. This chain is Phospho-N-acetylmuramoyl-pentapeptide-transferase, found in Photorhabdus laumondii subsp. laumondii (strain DSM 15139 / CIP 105565 / TT01) (Photorhabdus luminescens subsp. laumondii).